The following is a 380-amino-acid chain: Geranylgeranyl pyrophosphate synthase cle6 (380 aa).

A compositionally biased stretch (low complexity) spans 1-19; the sequence is MHSVRTSTTSTSSMVSSTM. Residues 1–55 form a disordered region; the sequence is MHSVRTSTTSTSSMVSSTMHPFDAFNAPQPYQQHHPPRWNIHNPHFSQTNGHSIQ. Residues 45–55 show a composition bias toward polar residues; it reads HFSQTNGHSIQ. The isopentenyl diphosphate site is built by lysine 102, arginine 105, and histidine 134. Positions 141 and 145 each coordinate Mg(2+). Position 150 (arginine 150) interacts with dimethylallyl diphosphate. Arginine 151 lines the isopentenyl diphosphate pocket. Dimethylallyl diphosphate contacts are provided by lysine 229, threonine 230, and glutamine 263. Aspartate 266 contacts Mg(2+). Dimethylallyl diphosphate-binding residues include asparagine 270, lysine 280, and lysine 290.

Belongs to the FPP/GGPP synthase family. Mg(2+) is required as a cofactor.

It catalyses the reaction isopentenyl diphosphate + dimethylallyl diphosphate = (2E)-geranyl diphosphate + diphosphate. The enzyme catalyses isopentenyl diphosphate + (2E)-geranyl diphosphate = (2E,6E)-farnesyl diphosphate + diphosphate. The catalysed reaction is isopentenyl diphosphate + (2E,6E)-farnesyl diphosphate = (2E,6E,10E)-geranylgeranyl diphosphate + diphosphate. It participates in secondary metabolite biosynthesis; terpenoid biosynthesis. Geranylgeranyl pyrophosphate synthase; part of the cluster A that mediates the biosynthesis of chevalone E and its oxidized derivatives that possess a unique five-membered lactone ring and can synergistically enhance the cytotoxicity of doxorubicin (DOX) in breast cancer cells. Within the pathway, cle6 takes part to the biosynthesis of the molecular scaffold by providing geranylgeranyl pyrophosphate (GGPP) to the prenyltransferase cle5 for C-3 geranylgeranylation of triacetic acid lactone. The molecular scaffold is commonly biosynthesized by a series of enzymes including the non-reducing polyketide synthase (NR-PKS) cle1 that produces the alpha-pyrone triacetic acid lactone (TAL); The membrane-bound prenyltransferase cle5 that accepts TAL as its substrate to perform a C-3 geranylgeranylation reaction, in which the pathway-dedicated GGPS cle6 is required to provide GGPP, the other substrate of cle5; the FAD-dependent monooxygenase Cle3 that forms an (S)-epoxide ring at the terminal olefin of the geranylgeranyl group; and the terpene cyclase Cle7 that catalyzes the cyclization of the prenyl group that yields the pentacyclic pathway intermediate chevalone E. Chevalone E can derivatize into seven new oxidized analogs by the cytochrome P450 monooxygenases cle2 (acting at C-20) and cle4 (acting at C-11 and C-12). The chain is Geranylgeranyl pyrophosphate synthase cle6 from Aspergillus versicolor.